The following is a 446-amino-acid chain: N-succinylarginine dihydrolase (446 aa).

Residues Ala19–Ser28, Asn110, and His137–Arg138 each bind substrate. Glu174 is a catalytic residue. A substrate-binding site is contributed by Arg213. The active site involves His249. Positions 251 and 364 each coordinate substrate. The Nucleophile role is filled by Cys370.

This sequence belongs to the succinylarginine dihydrolase family. As to quaternary structure, homodimer.

The enzyme catalyses N(2)-succinyl-L-arginine + 2 H2O + 2 H(+) = N(2)-succinyl-L-ornithine + 2 NH4(+) + CO2. It functions in the pathway amino-acid degradation; L-arginine degradation via AST pathway; L-glutamate and succinate from L-arginine: step 2/5. Catalyzes the hydrolysis of N(2)-succinylarginine into N(2)-succinylornithine, ammonia and CO(2). This Acinetobacter baylyi (strain ATCC 33305 / BD413 / ADP1) protein is N-succinylarginine dihydrolase.